Consider the following 384-residue polypeptide: MDEFKVTPWDVEGLVDYNKLIEEFGTSPLTDELLEKTAQLTKSELPLYFRRRFFFSHRDYDKVLQDYESGKGFFLYTGRGPSGPMHIGHIIPFFATKWLQEKFGVNLYIQITDDEKFLFKDKLTFEDTKYWAYQNILDIIAVGFDPDRTFIFQDSEFTKIYEMAIPIAKKINFSMAKAVFGFTEQSKIGMIFYPAIQAAPTFFEKKRCLIPAAIDQDPYWRLQRDFAESLGYYKTAAIHSKFVPGLMGLEGKMSASKPETAIYLTDDPEEVGRKIWKYALTGGRATAKEQREKGGEPEKCVVFKWLEIFFEEDDKKLMERYHACKNGELLCGQCKRYLIKKVQEFLKEHQKKRKEAEKKVEKFKYTGELAREQWDKAVPEALKG.

The 'HIGH' region signature appears at 81-89; that stretch reads PSGPMHIGH. The 'KMSKS' region motif lies at 252-256; that stretch reads KMSAS.

The protein belongs to the class-I aminoacyl-tRNA synthetase family.

Its subcellular location is the cytoplasm. It carries out the reaction tRNA(Trp) + L-tryptophan + ATP = L-tryptophyl-tRNA(Trp) + AMP + diphosphate + H(+). This Thermococcus onnurineus (strain NA1) protein is Tryptophan--tRNA ligase.